A 316-amino-acid polypeptide reads, in one-letter code: MAEAALEAVRSELREFPAAARELCVPLAVPYLDKPPTPLHFYRDWVCPNRPCIIRNALQHWPALQKWSLPYFRATVGSTEVSVAVTPDGYADAVRGDRFMMPAERRLPLSFVLDVLEGRAQHPGVLYVQKQCSNLPSELPQLLPDLESHVPWASEALGKMPDAVNFWLGEAAAVTSLHKDHYENLYCVVSGEKHFLFHPPSDRPFIPYELYTPATYQLTEEGTFKVVDEEAMEKVPWIPLDPLAPDLARYPSYSQAQALRCTVRAGEMLYLPALWFHHVQQSQGCIAVNFWYDMEYDLKYSYFQLLDSLTKASGLD.

Residues Val-128 to Asp-307 form the JmjC domain. Fe cation-binding residues include His-178, Asp-180, and His-277.

In terms of assembly, homodimer; disulfide-linked. Interacts with DRG1 and DRG2. The cofactor is Fe(2+).

It localises to the nucleus. The protein resides in the cytoplasm. The enzyme catalyses L-lysyl-[protein] + 2-oxoglutarate + O2 = (3S)-3-hydroxy-L-lysyl-[protein] + succinate + CO2. Functionally, bifunctional enzyme that acts both as an endopeptidase and 2-oxoglutarate-dependent monooxygenase. Endopeptidase that cleaves histones N-terminal tails at the carboxyl side of methylated arginine or lysine residues, to generate 'tailless nucleosomes', which may trigger transcription elongation. Preferentially recognizes and cleaves monomethylated and dimethylated arginine residues of histones H2, H3 and H4. After initial cleavage, continues to digest histones tails via its aminopeptidase activity. Additionally, may play a role in protein biosynthesis by modifying the translation machinery. Acts as a Fe(2+) and 2-oxoglutarate-dependent monooxygenase, catalyzing (S)-stereospecific hydroxylation at C-3 of 'Lys-22' of DRG1 and 'Lys-21' of DRG2 translation factors (TRAFAC), promoting their interaction with ribonucleic acids (RNA). This is Bifunctional peptidase and (3S)-lysyl hydroxylase JMJD7 from Homo sapiens (Human).